We begin with the raw amino-acid sequence, 585 residues long: PiggyBac transposable element-derived protein 4 (585 aa).

Residues 1-73 (MSNPRKRSIP…STSSDSGRSM (73 aa)) are disordered. Over residues 25–40 (DSFDESDFSEIDDSDN) the composition is skewed to acidic residues. Over residues 47–61 (EADKIRPLSHLESDG) the composition is skewed to basic and acidic residues. The span at 62–72 (KSSTSSDSGRS) shows a compositional bias: low complexity.

The chain is PiggyBac transposable element-derived protein 4 (PGBD4) from Homo sapiens (Human).